The chain runs to 537 residues: O-phosphoserine--tRNA(Cys) ligase (537 aa).

Residues 186–188 (HMT), 231–233 (SAS), 273–274 (YY), and Asn317 each bind substrate.

Belongs to the class-II aminoacyl-tRNA synthetase family. O-phosphoseryl-tRNA(Cys) synthetase subfamily. In terms of assembly, homotetramer. Interacts with SepCysS.

The catalysed reaction is tRNA(Cys) + O-phospho-L-serine + ATP = O-phospho-L-seryl-tRNA(Cys) + AMP + diphosphate. Its function is as follows. Catalyzes the attachment of O-phosphoserine (Sep) to tRNA(Cys). The sequence is that of O-phosphoserine--tRNA(Cys) ligase from Methanococcus maripaludis (strain C6 / ATCC BAA-1332).